The chain runs to 439 residues: Histone acetyltransferase GCN5 (439 aa).

Composition is skewed to basic and acidic residues over residues methionine 1 to asparagine 28 and glutamate 39 to glutamate 59. Positions methionine 1–glutamate 59 are disordered. The N-acetyltransferase domain occupies isoleucine 100–leucine 255. The active-site Proton donor/acceptor is the glutamate 173. Acetyl-CoA is bound by residues cysteine 177–isoleucine 179, glutamine 184–alanine 190, and tyrosine 216–glycine 219. The Bromo domain occupies proline 327–isoleucine 431.

It belongs to the acetyltransferase family. GCN5 subfamily. In terms of assembly, component of the 1.8 MDa SAGA (Spt-Ada-Gcn5 acetyltransferase) complex, which is composed of 19 subunits TRA1, SPT7, TAF5, NGG1/ADA3, SGF73, SPT20/ADA5, SPT8, TAF12, TAF6, HFI1/ADA1, UBP8, GCN5, ADA2, SPT3, SGF29, TAF10, TAF9, SGF11 and SUS1. The SAGA complex is composed of 4 modules, namely the HAT (histone acetyltransferase) module (GCN5, ADA2, NGG1/ADA3 and SGF29), the DUB (deubiquitinating) module (UBP8, SGF11, SGF73 and SUS1), the core or TAF (TBP-associated factor) module (TAF5, TAF6, TAF9, TAF10 and TAF12), and the Tra1 or SPT (Suppressor of Ty) module (TRA1, HFI1/ADA1, SPT3, SPT7, SPT8 and SPT20/ADA5). The Tra1/SPT module binds activators, the core module recruits TBP (TATA-binding protein), the HAT module contains the histone H3 acetyltransferase GCN5, and the DUB module comprises the histone H2B deubiquitinase UBP8. Also identified in an altered form of SAGA, named SALSA (SAGA altered, Spt8 absent) or SLIK (SAGA-like) complex, which contains a C-terminal truncated form of SPT7 and is missing SPT8. However, it has been shown that the SAGA and SAGA-like SALSA/SLIK transcriptional coactivators are structurally and biochemically equivalent. Component of the 0.8 MDa ADA complex, a HAT complex distinct from SAGA, which at least consists of ADA2, NGG1/ADA3, AHC1, AHC2, SGF29 and GCN5. Component of an ADA/GCN5 complex that consists of HFI1/ADA1, ADA2, NGG1/ADA3, SPT20/ADA5 and GCN5 and probably is a subcomplex of SAGA.

The protein localises to the nucleus. Its subcellular location is the cytoplasm. The enzyme catalyses L-lysyl-[protein] + acetyl-CoA = N(6)-acetyl-L-lysyl-[protein] + CoA + H(+). It carries out the reaction (2E)-butenoyl-CoA + L-lysyl-[protein] = N(6)-(2E)-butenoyl-L-lysyl-[protein] + CoA + H(+). In terms of biological role, histone acetyltransferase that acetylates histone H2B to form H2BK11ac and H2BK16ac, histone H3 to form H3K9ac, H3K14ac, H3K18ac, H3K23ac, H3K27ac and H3K36ac, with a lower preference histone H4 to form H4K8ac and H4K16ac, and contributes to H2A.Z acetylation. Acetylation of histones gives a specific tag for epigenetic transcription activation and elongation. Operates in concert with certain DNA-binding transcriptional activators such as GCN4 or HAP2/3/4. Its acetyltransferase activity seems to be dependent on the association in different multisubunit complexes. Component of the transcription coactivator SAGA complex. SAGA acts as a general cofactor required for essentially all RNA polymerase II transcription. At the promoters, SAGA is required for transcription pre-initiation complex (PIC) recruitment. It influences RNA polymerase II transcriptional activity through different activities such as TBP interaction (via core/TAF module) and promoter selectivity, interaction with transcription activators (via Tra1/SPT module), and chromatin modification through histone acetylation (via HAT module) and deubiquitination (via DUB module). SAGA preferentially acetylates histones H3 (to form H3K9ac, H3K14ac, H3K18ac and H3K23ac) and H2B and deubiquitinates histone H2B. SAGA interacts with DNA via upstream activating sequences (UASs). Also identified in a modified version of SAGA named SALSA or SLIK. The cleavage of SPT7 and the absence of the SPT8 subunit in SLIK neither drive any major conformational differences in its structure compared with SAGA, nor significantly affect HAT, DUB, or DNA-binding activities. Component of the ADA histone acetyltransferase complex, which preferentially acetylates nucleosomal histones H3 (to form H3K14ac and H3K18ac) and H2B. In addition to histone acetyltransferase, can use different acyl-CoA substrates, such as (2E)-butenoyl-CoA (crotonyl-CoA) and is able to mediate histone crotonylation. Controls the metaphase-to-anaphase transition and is required for correct chromosome segregation and centromere/kinetochore function in mitosis. May be involved in response to DNA damage by genotoxic agents. The protein is Histone acetyltransferase GCN5 of Saccharomyces cerevisiae (strain ATCC 204508 / S288c) (Baker's yeast).